The chain runs to 305 residues: Serine/threonine-protein phosphatase PP2A catalytic subunit (305 aa).

Residues Asp-53, His-55, Asp-81, and Asn-113 each contribute to the Mn(2+) site. Catalysis depends on His-114, which acts as the Proton donor. Positions 163 and 237 each coordinate Mn(2+).

Belongs to the PPP phosphatase family. PP-2A subfamily. Mn(2+) is required as a cofactor.

The enzyme catalyses O-phospho-L-seryl-[protein] + H2O = L-seryl-[protein] + phosphate. It catalyses the reaction O-phospho-L-threonyl-[protein] + H2O = L-threonyl-[protein] + phosphate. The protein is Serine/threonine-protein phosphatase PP2A catalytic subunit of Helianthus annuus (Common sunflower).